The chain runs to 67 residues: Light-harvesting protein B-870 alpha chain (67 aa).

Residues methionine 1–arginine 12 lie on the Cytoplasmic side of the membrane. Residues alanine 13–leucine 33 form a helical membrane-spanning segment. Histidine 29 lines the a bacteriochlorophyll pocket. Topologically, residues glycine 34 to lysine 67 are periplasmic.

It belongs to the antenna complex alpha subunit family. As to quaternary structure, an alpha/beta heterodimer. The core complex is formed by different alpha and beta chains, binding bacteriochlorophyll molecules, and arranged most probably in tetrameric structures disposed around the reaction center. The non-pigmented gamma chains may constitute additional components.

The protein localises to the cell inner membrane. Functionally, antenna complexes are light-harvesting systems, which transfer the excitation energy to the reaction centers. The chain is Light-harvesting protein B-870 alpha chain (pufA) from Rubrivivax gelatinosus (strain NBRC 100245 / IL144).